A 315-amino-acid polypeptide reads, in one-letter code: MGSRALPPGPVQTLIFLDLEATGLPFSQPKITELCLLAVHRYALEGLSAPQGPSPTAPVPPRVLDKLSLCVAPGKVCSPAASEITGLSTAVLAAHGRRAFDADLVNLIRTFLQRQPQPWCLVAHNGDRYDFPLLRAELALLGLASALDDAFCVDSIAALKALEPTGSSSEHGPRKSYSLGSVYTRLYGQAPPDSHTAEGDVLALLSVCQWRPRALLRWVDAHAKPFSTVKPMYVITTSTGTNPRPSAVTATVPLARASDTGPNLRGDRSPKPAPSPKMCPGAPPGEGLLAPLGLLAFLTLAVAMLYGLSLAMPGQ.

Asp-18 and Glu-20 together coordinate Mg(2+). Position 20–21 (20–21 (EA)) interacts with substrate. Ser-78 carries the post-translational modification Phosphoserine. A substrate-binding site is contributed by Tyr-129. The residue at position 167 (Ser-167) is a Phosphoserine. His-195 acts as the Proton donor/acceptor in catalysis. Residue Asp-200 coordinates Mg(2+). Asp-200 serves as a coordination point for substrate. Residues 236 to 315 (TTSTGTNPRP…YGLSLAMPGQ (80 aa)) form a necessary for endoplasmic reticulum localization region. The interval 243 to 315 (PRPSAVTATV…YGLSLAMPGQ (73 aa)) is interaction with UBQLN1. The disordered stretch occupies residues 256–282 (RASDTGPNLRGDRSPKPAPSPKMCPGA). Over residues 271-282 (KPAPSPKMCPGA) the composition is skewed to pro residues. The tract at residues 282 to 315 (APPGEGLLAPLGLLAFLTLAVAMLYGLSLAMPGQ) is necessary for cytoplasmic retention.

This sequence belongs to the exonuclease superfamily. TREX family. As to quaternary structure, homodimer. Interacts (via proline-rich region) with TCERG1/CA150 (via the second WW domain). Component of the SET complex, composed of at least ANP32A, APEX1, HMGB2, NME1, SET and TREX1. Within this complex, directly interacts with SET; this interaction does not result in TREX1 inhibition. Also interacts with NME1, but only following translocation to the nucleus. Directly interacts with UBQLN1 (via ubiquitin-like domain); the interaction may control TREX1 subcellular location. Mg(2+) is required as a cofactor. In terms of processing, ubiquitinated, but not targeted to proteasomal degradation. Ubiquitination may be important for interaction with UBQLN1.

The protein resides in the nucleus. It localises to the cytoplasm. The protein localises to the cytosol. It is found in the endoplasmic reticulum membrane. The enzyme catalyses Exonucleolytic cleavage in the 3'- to 5'-direction to yield nucleoside 5'-phosphates.. Functionally, major cellular 3'-to-5' DNA exonuclease which digests single-stranded DNA (ssDNA) and double-stranded DNA (dsDNA) with mismatched 3' termini. Prevents cell-intrinsic initiation of autoimmunity. Acts by metabolizing DNA fragments from endogenous retroelements, including L1, LTR and SINE elements. Plays a key role in degradation of DNA fragments at cytosolic micronuclei arising from genome instability: its association with the endoplasmic reticulum membrane directs TREX1 to ruptured micronuclei, leading to micronuclear DNA degradation. Micronuclear DNA degradation is required to limit CGAS activation and subsequent inflammation. Unless degraded, these DNA fragments accumulate in the cytosol and activate the cGAS-STING innate immune signaling, leading to the production of type I interferon. Prevents chronic ATM-dependent checkpoint activation, by processing ssDNA polynucleotide species arising from the processing of aberrant DNA replication intermediates. Inefficiently degrades oxidized DNA, such as that generated upon antimicrobial reactive oxygen production or upon absorption of UV light. During GZMA-mediated cell death, contributes to DNA damage in concert with NME1. NME1 nicks one strand of DNA and TREX1 removes bases from the free 3' end to enhance DNA damage and prevent DNA end reannealing and rapid repair. This chain is Three-prime repair exonuclease 1, found in Bos taurus (Bovine).